Here is a 344-residue protein sequence, read N- to C-terminus: Ferredoxin--NADP reductase (344 aa).

Residues D36, Q44, Y49, V89, F127, D291, and T332 each coordinate FAD.

This sequence belongs to the ferredoxin--NADP reductase type 2 family. Homodimer. FAD is required as a cofactor.

It carries out the reaction 2 reduced [2Fe-2S]-[ferredoxin] + NADP(+) + H(+) = 2 oxidized [2Fe-2S]-[ferredoxin] + NADPH. This Beijerinckia indica subsp. indica (strain ATCC 9039 / DSM 1715 / NCIMB 8712) protein is Ferredoxin--NADP reductase.